The primary structure comprises 386 residues: MLKVKRLEEISSCHSSNPLEKVAFFQCMEEVEKVKCFLEENSGDLDLQSGDNEAEENVWSNRALDERIIVKGGRTSALTDDIPAPAAPFDHRMVMAKHASVDNLYTVSKSEILGGGRFGQVHKCEEKATGLKLAAKIIKTRGAKDKEDVKNEISVMNQLDHVNLIQLYDAFESKHDIILVMDVEGGELFDRIIDENCNLTELDTILFMKQICEGIRYMHQMYILHLDLKPENILCVNRDAKQIKIIDFGLARRYKPREKLKVNFGTPEFLAPEVVNYDFVSFSTDMWSVGVITYMLLSGLSPFLGDNDAETLTNILACRWDLEDEEFQDISEEAKEFISKLLIKEKSWRISASEALKHPWLSDHKLHSRLSAQKNCNSGVLNLTTK.

Ser100 is modified (phosphoserine). The 255-residue stretch at 107–361 (VSKSEILGGG…ASEALKHPWL (255 aa)) folds into the Protein kinase domain. ATP-binding positions include 113–121 (LGGGRFGQV) and Lys136. Asp227 acts as the Proton acceptor in catalysis.

Belongs to the protein kinase superfamily. CAMK Ser/Thr protein kinase family.

The catalysed reaction is L-seryl-[protein] + ATP = O-phospho-L-seryl-[protein] + ADP + H(+). It catalyses the reaction L-threonyl-[protein] + ATP = O-phospho-L-threonyl-[protein] + ADP + H(+). The chain is Myosin light chain kinase family member 4 (Mylk4) from Mus musculus (Mouse).